The sequence spans 252 residues: Imidazole glycerol phosphate synthase subunit HisF (252 aa).

Active-site residues include D11 and D130.

Belongs to the HisA/HisF family. Heterodimer of HisH and HisF.

It is found in the cytoplasm. It carries out the reaction 5-[(5-phospho-1-deoxy-D-ribulos-1-ylimino)methylamino]-1-(5-phospho-beta-D-ribosyl)imidazole-4-carboxamide + L-glutamine = D-erythro-1-(imidazol-4-yl)glycerol 3-phosphate + 5-amino-1-(5-phospho-beta-D-ribosyl)imidazole-4-carboxamide + L-glutamate + H(+). The protein operates within amino-acid biosynthesis; L-histidine biosynthesis; L-histidine from 5-phospho-alpha-D-ribose 1-diphosphate: step 5/9. Functionally, IGPS catalyzes the conversion of PRFAR and glutamine to IGP, AICAR and glutamate. The HisF subunit catalyzes the cyclization activity that produces IGP and AICAR from PRFAR using the ammonia provided by the HisH subunit. The chain is Imidazole glycerol phosphate synthase subunit HisF from Petrotoga mobilis (strain DSM 10674 / SJ95).